A 218-amino-acid chain; its full sequence is Hypoxanthine-guanine phosphoribosyltransferase (218 aa).

Residue Lys69 participates in GMP binding. N6-acetyllysine is present on Lys103. Lys115 participates in a covalent cross-link: Glycyl lysine isopeptide (Lys-Gly) (interchain with G-Cter in SUMO1); alternate. Residue Lys115 forms a Glycyl lysine isopeptide (Lys-Gly) (interchain with G-Cter in SUMO2); alternate linkage. Residues Glu134–Thr142, Lys166, Lys186–Val188, and Asp194 each bind GMP. Asp138 (proton acceptor) is an active-site residue. Phosphothreonine is present on Thr142. Asp194 lines the Mg(2+) pocket.

The protein belongs to the purine/pyrimidine phosphoribosyltransferase family. Homotetramer. Requires Mg(2+) as cofactor.

Its subcellular location is the cytoplasm. It catalyses the reaction IMP + diphosphate = hypoxanthine + 5-phospho-alpha-D-ribose 1-diphosphate. It carries out the reaction GMP + diphosphate = guanine + 5-phospho-alpha-D-ribose 1-diphosphate. It functions in the pathway purine metabolism; IMP biosynthesis via salvage pathway; IMP from hypoxanthine: step 1/1. Functionally, converts guanine to guanosine monophosphate, and hypoxanthine to inosine monophosphate. Transfers the 5-phosphoribosyl group from 5-phosphoribosylpyrophosphate onto the purine. Plays a central role in the generation of purine nucleotides through the purine salvage pathway. The polypeptide is Hypoxanthine-guanine phosphoribosyltransferase (Hprt1) (Rattus norvegicus (Rat)).